We begin with the raw amino-acid sequence, 494 residues long: 4-trimethylaminobutyraldehyde dehydrogenase (494 aa).

Serine 2 carries the N-acetylserine modification. Lysine 30 carries the N6-acetyllysine; alternate modification. At lysine 30 the chain carries N6-succinyllysine; alternate. Lysine 59 carries the post-translational modification N6-succinyllysine. NAD(+) is bound by residues lysine 180 and 232 to 236; that span reads GSVPT. The Proton acceptor role is filled by glutamate 254. Cysteine 288 (nucleophile) is an active-site residue. Lysine 298 carries the N6-acetyllysine modification. Glutamate 391 lines the NAD(+) pocket.

This sequence belongs to the aldehyde dehydrogenase family. In terms of assembly, homotetramer. In terms of tissue distribution, detected in lever (at protein level).

It localises to the cytoplasm. It is found in the cytosol. It catalyses the reaction 4-(trimethylamino)butanal + NAD(+) + H2O = 4-(trimethylamino)butanoate + NADH + 2 H(+). The enzyme catalyses an aldehyde + NAD(+) + H2O = a carboxylate + NADH + 2 H(+). It carries out the reaction 4-aminobutanal + NAD(+) + H2O = 4-aminobutanoate + NADH + 2 H(+). The catalysed reaction is formaldehyde + NAD(+) + H2O = formate + NADH + 2 H(+). It catalyses the reaction acetaldehyde + NAD(+) + H2O = acetate + NADH + 2 H(+). The enzyme catalyses imidazole-4-acetaldehyde + NAD(+) + H2O = imidazole-4-acetate + NADH + 2 H(+). It carries out the reaction acrolein + NAD(+) + H2O = acrylate + NADH + 2 H(+). The catalysed reaction is (5-hydroxyindol-3-yl)acetaldehyde + NAD(+) + H2O = (5-hydroxyindol-3-yl)acetate + NADH + 2 H(+). It catalyses the reaction 3,4-dihydroxyphenylacetaldehyde + NAD(+) + H2O = 3,4-dihydroxyphenylacetate + NADH + 2 H(+). The enzyme catalyses spermine monoaldehyde + NAD(+) + H2O = N-(2-carboxyethyl)spermidine + NADH + 2 H(+). It carries out the reaction propanal + NAD(+) + H2O = propanoate + NADH + 2 H(+). The catalysed reaction is butanal + NAD(+) + H2O = butanoate + NADH + 2 H(+). It catalyses the reaction pentanal + NAD(+) + H2O = pentanoate + NADH + 2 H(+). The enzyme catalyses hexanal + NAD(+) + H2O = hexanoate + NADH + 2 H(+). It participates in amine and polyamine biosynthesis; carnitine biosynthesis. Its function is as follows. Converts gamma-trimethylaminobutyraldehyde into gamma-butyrobetaine with high efficiency (in vitro). Can catalyze the irreversible oxidation of a broad range of aldehydes to the corresponding acids in an NAD-dependent reaction, but with low efficiency. Catalyzes the oxidation of aldehydes arising from biogenic amines and polyamines. This is 4-trimethylaminobutyraldehyde dehydrogenase (Aldh9a1) from Rattus norvegicus (Rat).